The sequence spans 187 residues: Shikimate kinase (187 aa).

Residue 14–19 (GSGKST) participates in ATP binding. Ser18 contributes to the Mg(2+) binding site. Substrate contacts are provided by Asp36, Arg60, and Gly82. Arg120 serves as a coordination point for ATP. Arg147 contacts substrate.

The protein belongs to the shikimate kinase family. In terms of assembly, monomer. Requires Mg(2+) as cofactor.

Its subcellular location is the cytoplasm. The catalysed reaction is shikimate + ATP = 3-phosphoshikimate + ADP + H(+). The protein operates within metabolic intermediate biosynthesis; chorismate biosynthesis; chorismate from D-erythrose 4-phosphate and phosphoenolpyruvate: step 5/7. In terms of biological role, catalyzes the specific phosphorylation of the 3-hydroxyl group of shikimic acid using ATP as a cosubstrate. In Chlorobaculum parvum (strain DSM 263 / NCIMB 8327) (Chlorobium vibrioforme subsp. thiosulfatophilum), this protein is Shikimate kinase.